The chain runs to 876 residues: Alanine--tRNA ligase (876 aa).

At lysine 74 the chain carries N6-acetyllysine. Zn(2+)-binding residues include histidine 564, histidine 568, cysteine 666, and histidine 670.

Belongs to the class-II aminoacyl-tRNA synthetase family. In terms of assembly, homotetramer. It depends on Zn(2+) as a cofactor.

Its subcellular location is the cytoplasm. It catalyses the reaction tRNA(Ala) + L-alanine + ATP = L-alanyl-tRNA(Ala) + AMP + diphosphate. Catalyzes the attachment of alanine to tRNA(Ala) in a two-step reaction: alanine is first activated by ATP to form Ala-AMP and then transferred to the acceptor end of tRNA(Ala). Also edits incorrectly charged Ser-tRNA(Ala) and Gly-tRNA(Ala) via its editing domain. This chain is Alanine--tRNA ligase, found in Escherichia coli O1:K1 / APEC.